The primary structure comprises 124 residues: uncharacterized protein (124 aa).

It is found in the plastid. Its subcellular location is the chloroplast. This is an uncharacterized protein from Chlamydomonas reinhardtii (Chlamydomonas smithii).